Consider the following 379-residue polypeptide: Glucose-1-phosphate adenylyltransferase (379 aa).

Residues glycine 164, 179-180 (EK), and serine 190 contribute to the alpha-D-glucose 1-phosphate site.

This sequence belongs to the bacterial/plant glucose-1-phosphate adenylyltransferase family. In terms of assembly, homotetramer.

The enzyme catalyses alpha-D-glucose 1-phosphate + ATP + H(+) = ADP-alpha-D-glucose + diphosphate. The protein operates within glycan biosynthesis; glycogen biosynthesis. Functionally, involved in the biosynthesis of ADP-glucose, a building block required for the elongation reactions to produce glycogen. Catalyzes the reaction between ATP and alpha-D-glucose 1-phosphate (G1P) to produce pyrophosphate and ADP-Glc. The chain is Glucose-1-phosphate adenylyltransferase from Streptococcus equi subsp. zooepidemicus (strain H70).